A 442-amino-acid polypeptide reads, in one-letter code: Trigger factor (442 aa).

The PPIase FKBP-type domain occupies 162–247; that stretch reads GDRMTFDFEG…VKAIESRELP (86 aa).

This sequence belongs to the FKBP-type PPIase family. Tig subfamily.

The protein resides in the cytoplasm. The enzyme catalyses [protein]-peptidylproline (omega=180) = [protein]-peptidylproline (omega=0). Its function is as follows. Involved in protein export. Acts as a chaperone by maintaining the newly synthesized protein in an open conformation. Functions as a peptidyl-prolyl cis-trans isomerase. The chain is Trigger factor from Magnetococcus marinus (strain ATCC BAA-1437 / JCM 17883 / MC-1).